Consider the following 390-residue polypeptide: MSVYNPNDADFAFTIGIEEEYQIVDPETRELRSYITQILEPGRTILREQIKPEMHQSIVEVGTRPCRTISEARAEIVRLRGAIAGLAARHNLRIVAAGTHPFSSWMQQEITPDERYRMVVGEMQEAALQLLIFGMHCHIGMPNNEVAIELMNVARYICPHLLALSTSSPFWMGRNTGFKSYRSVIFSTFPRTGIPPTFHSASEFERYVQLLINTGCIDNGKKIWWDLRPHPFFGTLEFRVCDIATKVEECLALAATMQALIVKFYTMFEENTTFRVYRRALINENKWRAQRWGLDGKLIDFGKRKEVEAKALVHEIVELVDDVVDMLGSRKEVEYLLTIVDQGTSADRQLRVFAETNDLKAVVDSLMNETIEGVPVMTFDTESSVQTAHS.

It belongs to the glutamate--cysteine ligase type 2 family. YbdK subfamily.

The enzyme catalyses L-cysteine + L-glutamate + ATP = gamma-L-glutamyl-L-cysteine + ADP + phosphate + H(+). Its function is as follows. ATP-dependent carboxylate-amine ligase which exhibits weak glutamate--cysteine ligase activity. This Chloroflexus aggregans (strain MD-66 / DSM 9485) protein is Putative glutamate--cysteine ligase 2.